A 230-amino-acid chain; its full sequence is Uracil-DNA glycosylase (230 aa).

The active-site Proton acceptor is Asp70.

Belongs to the uracil-DNA glycosylase (UDG) superfamily. UNG family.

It is found in the cytoplasm. It carries out the reaction Hydrolyzes single-stranded DNA or mismatched double-stranded DNA and polynucleotides, releasing free uracil.. Excises uracil residues from the DNA which can arise as a result of misincorporation of dUMP residues by DNA polymerase or due to deamination of cytosine. The chain is Uracil-DNA glycosylase from Pseudomonas fluorescens (strain ATCC BAA-477 / NRRL B-23932 / Pf-5).